A 467-amino-acid chain; its full sequence is Retinoic acid receptor RXR-alpha (467 aa).

The tract at residues 1 to 61 (MDTKHFLPLD…LHSPISTLSS (61 aa)) is disordered. The segment at 1–139 (MDTKHFLPLD…GNMSSFTKHI (139 aa)) is modulating. Lys-4 participates in a covalent cross-link: Glycyl lysine isopeptide (Lys-Gly) (interchain with G-Cter in SUMO2). Ser-22 and Ser-28 each carry phosphoserine. The span at 32–55 (PSLHPSLGPGLGSPLGSPGQLHSP) shows a compositional bias: low complexity. A phosphoserine; by MAPK8 and MAPK9 mark is found at Ser-61 and Ser-75. The segment at 79 to 109 (PHSMSVPTTPTLGFETGSPQLNSPMNPVSSS) is disordered. The span at 83-109 (SVPTTPTLGFETGSPQLNSPMNPVSSS) shows a compositional bias: polar residues. A Phosphothreonine; by MAPK8 and MAPK9 modification is found at Thr-87. Lys-113 participates in a covalent cross-link: Glycyl lysine isopeptide (Lys-Gly) (interchain with G-Cter in SUMO). The residue at position 134 (Ser-134) is a Phosphoserine. Residues Cys-140 and Cys-143 each contribute to the Zn(2+) site. An NR C4-type zinc finger spans residues 140–160 (CAICGDRSSGKHYGVYSCEGC). Positions 140 to 205 (CAICGDRSSG…RYQKCLAMGM (66 aa)) form a DNA-binding region, nuclear receptor. Lys-150 bears the N6-acetyllysine mark. Residues Cys-157 and Cys-160 each coordinate Zn(2+). A nuclear localization signal region spans residues 165 to 170 (KRTVRK). Positions 176, 182, 192, and 195 each coordinate Zn(2+). An NR C4-type zinc finger spans residues 176–200 (CRDNKDCLIDKRQRNRCQYCRYQKC). The interval 206-229 (KREAVQEERQRGKDRNENEVESTS) is hinge. Basic and acidic residues predominate over residues 211–223 (QEERQRGKDRNEN). A disordered region spans residues 211-233 (QEERQRGKDRNENEVESTSSANE). An NR LBD domain is found at 232-463 (NEDMPVEKIL…TFLMEMLEAP (232 aa)). Ser-264 bears the Phosphoserine mark. At Ser-265 the chain carries Phosphoserine; by MAPK8 and MAPK9. Residues Arg-321 and Ala-332 each contribute to the 9-cis-retinoate site. Residues Arg-321 and Ala-332 each contribute to the all-trans-retinoate site. The required for nuclear export stretch occupies residues 353–373 (RVLTELVSKMRDMQMDKTELG).

The protein belongs to the nuclear hormone receptor family. NR2 subfamily. As to quaternary structure, homodimer. Heterodimer (via C-terminus) with RARA; required for ligand-dependent retinoic acid receptor transcriptional activity; association with RARA is enhanced by pulsatile shear stress. Heterodimer with PPARA (via the leucine-like zipper in the LBD); the interaction is required for PPARA transcriptional activity. Heterodimerizes with PPARG. Heterodimerizes (via NR LBD) with RARB. Heterodimerizes with NR1H4; the heterodimerization enhances the binding affinity for LXXLL motifs from coactivators. Interacts with NCOA3 and NCOA6 coactivators. Interacts with FAM120B. Interacts with coactivator PELP1, SENP6, SFPQ, DNTTIP2 and RNF8. Interacts with PRMT2. Interacts with ASXL1. Interacts with BHLHE40/DEC1, BHLHE41/DEC2, MED1, NCOR1 and NCOR2. Interacts in a ligand-dependent fashion with MED1 and NCOA1. Interacts with VDR. Interacts with EP300; the interaction is decreased by 9-cis retinoic acid. Heterodimer (via C-terminus) with NR4A1 (DNA-binding domain); the interaction is enhanced by 9-cis retinoic acid. NR4A1 competes with EP300 for interaction with RXRA and thereby attenuates EP300 mediated acetylation of RXRA. In the absence of hormonal ligand, interacts with TACC1. Interacts ith IGFBP3. Phosphorylated on serine and threonine residues mainly in the N-terminal modulating domain. Constitutively phosphorylated on Ser-22 in the presence or absence of ligand. Under stress conditions, hyperphosphorylated by activated JNK on Ser-61, Ser-75, Thr-87 and Ser-265. Phosphorylated on Ser-28, in vitro, by PKA. This phosphorylation is required for repression of cAMP-mediated transcriptional activity of RARA. In terms of processing, ubiquitinated by UBR5, leading to its degradation: UBR5 specifically recognizes and binds ligand-bound RXRA when it is not associated with coactivators (NCOAs). In presence of NCOAs, the UBR5-degron is not accessible, preventing its ubiquitination and degradation. Post-translationally, sumoylation negatively regulates transcriptional activity. Desumoylated specifically by SENP6. Acetylated by EP300; acetylation enhances DNA binding and transcriptional activity. In terms of tissue distribution, expressed in the adrenal gland with main expression in the zona fasciculata and medulla (at protein level). Expressed in aortic endothelial cells, with high expression in the descending thoracic aorta and the outer curvature of the aortic arch, where pulsatory shear stress exists, but very low in the inner curvature of the aortic arch, where oscillatory shear stress prevails (at protein level).

It localises to the nucleus. Its subcellular location is the cytoplasm. The protein localises to the mitochondrion. In terms of biological role, receptor for retinoic acid that acts as a transcription factor. Forms homo- or heterodimers with retinoic acid receptors (RARs) and binds to target response elements in response to their ligands, all-trans or 9-cis retinoic acid, to regulate gene expression in various biological processes. The RAR/RXR heterodimers bind to the retinoic acid response elements (RARE) composed of tandem 5'-AGGTCA-3' sites known as DR1-DR5 to regulate transcription. The high affinity ligand for retinoid X receptors (RXRs) is 9-cis retinoic acid. In the absence of ligand, the RXR-RAR heterodimers associate with a multiprotein complex containing transcription corepressors that induce histone deacetylation, chromatin condensation and transcriptional suppression. On ligand binding, the corepressors dissociate from the receptors and coactivators are recruited leading to transcriptional activation. Serves as a common heterodimeric partner for a number of nuclear receptors, such as RARA, RARB and PPARA. The RXRA/RARB heterodimer can act as a transcriptional repressor or transcriptional activator, depending on the RARE DNA element context. The RXRA/PPARA heterodimer is required for PPARA transcriptional activity on fatty acid oxidation genes such as ACOX1 and the P450 system genes. Together with RARA, positively regulates microRNA-10a expression, thereby inhibiting the GATA6/VCAM1 signaling response to pulsatile shear stress in vascular endothelial cells. Acts as an enhancer of RARA binding to RARE DNA element. May facilitate the nuclear import of heterodimerization partners such as VDR and NR4A1. Promotes myelin debris phagocytosis and remyelination by macrophages. Plays a role in the attenuation of the innate immune system in response to viral infections, possibly by negatively regulating the transcription of antiviral genes such as type I IFN genes. Involved in the regulation of calcium signaling by repressing ITPR2 gene expression, thereby controlling cellular senescence. The protein is Retinoic acid receptor RXR-alpha (Rxra) of Rattus norvegicus (Rat).